The sequence spans 412 residues: MMRSSSLQKNIMLLRVGSKDSTRFRILILNFGPQHPASHGVLRLVIVIIGEVVTKLDPHIGFLHRGTERLVEEHSYMNAAVFMDRLDYTTVLTQTHAYCLAVEQALAKSRLCIRTQLLRTIFDELSRILNHLLSIATHALDIGTMAMLFWAFEDRERIMELYEYISGARMHTALYYPNQTLDHILTNELLAKILIFSRNSEKTYTEIYIALYNNRVWRLRLCGIGVVSTEISTSTTISGPVARSTGLQLDMRSGENYQYGYYASLTLRIFLGISGDSFDRFIIRLRELFESTRLIYNSLIELSAYINISVYNMCSYSNNPHLKIESLIELFRYSLGEYLLNISLVSGFVESGKGIFGIMLAANNTNRPYRLYIRSPAYMHLQLLPKLGAGHHIADLATLLGSIDVVFGEVDR.

The protein belongs to the complex I 49 kDa subunit family.

Its subcellular location is the hydrogenosome. The catalysed reaction is a ubiquinone + NADH + 5 H(+)(in) = a ubiquinol + NAD(+) + 4 H(+)(out). Transfer of electrons from NADH to the respiratory chain. The immediate electron acceptor for the enzyme is believed to be ubiquinone. Component of the iron-sulfur (IP) fragment of the enzyme. The protein is NADH-ubiquinone oxidoreductase 49 kDa subunit (nad7) of Nyctotherus ovalis.